The sequence spans 354 residues: MYVAVKGGEKAIDAAHALQESRRRGDTDLPELSVAQIEQQLNLAVDRVMTEGGIADRELAALALKQASGDNVEAIFLLRAYRTTLAKLAVSEPLDTTGMRLERRISAVYKDIPGGQLLGPTYDYTHRLLDFTLLANGEAPTLTTADSEQQPSPHVFSLLARQGLAKFEEDSGAQPDDITRTPPVYPCSRSSRLQQLMRGDEGYLLALAYSTQRGYGRNHPFAGEIRSGYIDVSIVPEELGFAVNVGELLMTECEMVNGFIDPPGEPPHFTRGYGLVFGMSERKAMAMALVDRALQAPEYGEHATGPAQDEEFVLAHADNVEAAGFVSHLKLPHYVDFQAELELLKRLQQEQNHG.

The protein belongs to the PhnI family. In terms of assembly, forms a complex with PhnG, PhnH, PhnJ and PhnK with the suggested composition PhnG(4)H(2)I(2)J(2)K.

It catalyses the reaction methylphosphonate + ATP = alpha-D-ribose 1-methylphosphonate 5-triphosphate + adenine. It carries out the reaction ATP + H2O = D-ribose 5-triphosphate + adenine. Functionally, together with PhnG, PhnH and PhnL is required for the transfer of the ribose triphosphate moiety from ATP to methyl phosphonate. PhnI alone has nucleosidase activity, catalyzing the hydrolysis of ATP or GTP forming alpha-D-ribose 5-triphosphate and adenine or guanine, respectively. The polypeptide is Alpha-D-ribose 1-methylphosphonate 5-triphosphate synthase subunit PhnI (phnI) (Escherichia coli (strain K12)).